The sequence spans 525 residues: Peptide chain release factor 3 (525 aa).

A tr-type G domain is found at 9–276; that stretch reads AKRRTFAIIS…GFTRYAPAPQ (268 aa). Residues 18 to 25, 86 to 90, and 140 to 143 each bind GTP; these read SHPDAGKT, DTPGH, and NKFD.

It belongs to the TRAFAC class translation factor GTPase superfamily. Classic translation factor GTPase family. PrfC subfamily.

It localises to the cytoplasm. Its function is as follows. Increases the formation of ribosomal termination complexes and stimulates activities of RF-1 and RF-2. It binds guanine nucleotides and has strong preference for UGA stop codons. It may interact directly with the ribosome. The stimulation of RF-1 and RF-2 is significantly reduced by GTP and GDP, but not by GMP. This Francisella tularensis subsp. mediasiatica (strain FSC147) protein is Peptide chain release factor 3.